The sequence spans 125 residues: Small ribosomal subunit protein uS12 (125 aa).

The disordered stretch occupies residues 1–31; that stretch reads MPTINQLVRHGRQTEVTKSKSPAMQGGPQRR. Residue aspartate 89 is modified to 3-methylthioaspartic acid. The segment at 105-125 is disordered; sequence QGVKDRKQSRSKYGAKRPKKA. Over residues 113–125 the composition is skewed to basic residues; sequence SRSKYGAKRPKKA.

This sequence belongs to the universal ribosomal protein uS12 family. Part of the 30S ribosomal subunit. Contacts proteins S8 and S17. May interact with IF1 in the 30S initiation complex.

With S4 and S5 plays an important role in translational accuracy. Functionally, interacts with and stabilizes bases of the 16S rRNA that are involved in tRNA selection in the A site and with the mRNA backbone. Located at the interface of the 30S and 50S subunits, it traverses the body of the 30S subunit contacting proteins on the other side and probably holding the rRNA structure together. The combined cluster of proteins S8, S12 and S17 appears to hold together the shoulder and platform of the 30S subunit. In Methylibium petroleiphilum (strain ATCC BAA-1232 / LMG 22953 / PM1), this protein is Small ribosomal subunit protein uS12.